Reading from the N-terminus, the 378-residue chain is Erythronate-4-phosphate dehydrogenase (378 aa).

Ser-45 and Thr-66 together coordinate substrate. Asp-146 and Thr-175 together coordinate NAD(+). Arg-208 is an active-site residue. Asp-232 serves as a coordination point for NAD(+). Glu-237 is a catalytic residue. His-254 serves as the catalytic Proton donor. Gly-257 provides a ligand contact to NAD(+). Position 258 (Tyr-258) interacts with substrate.

Belongs to the D-isomer specific 2-hydroxyacid dehydrogenase family. PdxB subfamily. Homodimer.

It is found in the cytoplasm. It carries out the reaction 4-phospho-D-erythronate + NAD(+) = (R)-3-hydroxy-2-oxo-4-phosphooxybutanoate + NADH + H(+). It functions in the pathway cofactor biosynthesis; pyridoxine 5'-phosphate biosynthesis; pyridoxine 5'-phosphate from D-erythrose 4-phosphate: step 2/5. Catalyzes the oxidation of erythronate-4-phosphate to 3-hydroxy-2-oxo-4-phosphonooxybutanoate. This is Erythronate-4-phosphate dehydrogenase from Salmonella arizonae (strain ATCC BAA-731 / CDC346-86 / RSK2980).